A 102-amino-acid chain; its full sequence is Large ribosomal subunit protein bL21 (102 aa).

Belongs to the bacterial ribosomal protein bL21 family. In terms of assembly, part of the 50S ribosomal subunit. Contacts protein L20.

Its function is as follows. This protein binds to 23S rRNA in the presence of protein L20. The sequence is that of Large ribosomal subunit protein bL21 from Finegoldia magna (strain ATCC 29328 / DSM 20472 / WAL 2508) (Peptostreptococcus magnus).